The primary structure comprises 570 residues: Sulfite reductase [NADPH] hemoprotein beta-component (570 aa).

The [4Fe-4S] cluster site is built by cysteine 434, cysteine 440, cysteine 479, and cysteine 483. Cysteine 483 is a siroheme binding site.

This sequence belongs to the nitrite and sulfite reductase 4Fe-4S domain family. As to quaternary structure, alpha(8)-beta(8). The alpha component is a flavoprotein, the beta component is a hemoprotein. It depends on siroheme as a cofactor. [4Fe-4S] cluster is required as a cofactor.

The enzyme catalyses hydrogen sulfide + 3 NADP(+) + 3 H2O = sulfite + 3 NADPH + 4 H(+). The protein operates within sulfur metabolism; hydrogen sulfide biosynthesis; hydrogen sulfide from sulfite (NADPH route): step 1/1. Its function is as follows. Component of the sulfite reductase complex that catalyzes the 6-electron reduction of sulfite to sulfide. This is one of several activities required for the biosynthesis of L-cysteine from sulfate. The chain is Sulfite reductase [NADPH] hemoprotein beta-component from Escherichia fergusonii (strain ATCC 35469 / DSM 13698 / CCUG 18766 / IAM 14443 / JCM 21226 / LMG 7866 / NBRC 102419 / NCTC 12128 / CDC 0568-73).